We begin with the raw amino-acid sequence, 428 residues long: Kynureninase (428 aa).

Pyridoxal 5'-phosphate is bound by residues Thr-104, Thr-105, 132–135, Asp-213, His-216, and Tyr-238; that span reads FPSD. Position 239 is an N6-(pyridoxal phosphate)lysine (Lys-239). Residues Trp-267 and Thr-295 each coordinate pyridoxal 5'-phosphate.

The protein belongs to the kynureninase family. In terms of assembly, homodimer. Pyridoxal 5'-phosphate is required as a cofactor.

It carries out the reaction L-kynurenine + H2O = anthranilate + L-alanine + H(+). It catalyses the reaction 3-hydroxy-L-kynurenine + H2O = 3-hydroxyanthranilate + L-alanine + H(+). It participates in amino-acid degradation; L-kynurenine degradation; L-alanine and anthranilate from L-kynurenine: step 1/1. It functions in the pathway cofactor biosynthesis; NAD(+) biosynthesis; quinolinate from L-kynurenine: step 2/3. In terms of biological role, catalyzes the cleavage of L-kynurenine (L-Kyn) and L-3-hydroxykynurenine (L-3OHKyn) into anthranilic acid (AA) and 3-hydroxyanthranilic acid (3-OHAA), respectively. This is Kynureninase from Bacillus cereus (strain ZK / E33L).